The following is a 528-amino-acid chain: Bifunctional purine biosynthesis protein PurH (528 aa).

One can recognise an MGS-like domain in the interval 1–146; the sequence is MAPTALLSVS…KNHDHVAVLT (146 aa).

Belongs to the PurH family.

The catalysed reaction is (6R)-10-formyltetrahydrofolate + 5-amino-1-(5-phospho-beta-D-ribosyl)imidazole-4-carboxamide = 5-formamido-1-(5-phospho-D-ribosyl)imidazole-4-carboxamide + (6S)-5,6,7,8-tetrahydrofolate. The enzyme catalyses IMP + H2O = 5-formamido-1-(5-phospho-D-ribosyl)imidazole-4-carboxamide. It participates in purine metabolism; IMP biosynthesis via de novo pathway; 5-formamido-1-(5-phospho-D-ribosyl)imidazole-4-carboxamide from 5-amino-1-(5-phospho-D-ribosyl)imidazole-4-carboxamide (10-formyl THF route): step 1/1. It functions in the pathway purine metabolism; IMP biosynthesis via de novo pathway; IMP from 5-formamido-1-(5-phospho-D-ribosyl)imidazole-4-carboxamide: step 1/1. The protein is Bifunctional purine biosynthesis protein PurH of Synechococcus sp. (strain WH7803).